An 80-amino-acid polypeptide reads, in one-letter code: Large ribosomal subunit protein bL31B (80 aa).

It belongs to the bacterial ribosomal protein bL31 family. Type B subfamily. Part of the 50S ribosomal subunit.

This chain is Large ribosomal subunit protein bL31B, found in Xanthomonas axonopodis pv. citri (strain 306).